We begin with the raw amino-acid sequence, 397 residues long: Protein Mx1 (397 aa).

This sequence belongs to the TRAFAC class dynamin-like GTPase superfamily. Dynamin/Fzo/YdjA family.

The protein is Protein Mx1 (Mx1) of Mus musculus (Mouse).